Consider the following 317-residue polypeptide: MTVIDDRDMMGAESSELSEAGARDYFELLKPRVMSLVVFTAFAGLVLAPGEINPILGLIAILCIAVGAGASGALNMWYDADIDAVMTRTAKRPIPSGRIAPREALAFGLTLSAFSVVILGLAVNWFSAGLLAFTIFFYAVVYTMWLKRSTPQNIVIGGAAGAFPPMLGWACVTGGVSLDSVILFLIIFLWTPAHFWALALFKMRDYGAVGIPMMPNVAGERSTKNQMIVYAVLTAAAAVAPFFTGLASAGYGIFAAVLSAIFVYCSFDVRRMPEGDEKMLPAKKMFAYSVLYLFAIFSGLLADHFAPALKAVISGVL.

A run of 7 helical transmembrane segments spans residues 33–53, 54–74, 117–137, 154–174, 181–201, 242–262, and 285–305; these read VMSL…GEIN, PILG…SGAL, VILG…TIFF, IVIG…CVTG, VILF…LALF, FFTG…SAIF, and MFAY…ADHF.

Belongs to the UbiA prenyltransferase family. Protoheme IX farnesyltransferase subfamily.

It is found in the cell inner membrane. The catalysed reaction is heme b + (2E,6E)-farnesyl diphosphate + H2O = Fe(II)-heme o + diphosphate. It participates in porphyrin-containing compound metabolism; heme O biosynthesis; heme O from protoheme: step 1/1. In terms of biological role, converts heme B (protoheme IX) to heme O by substitution of the vinyl group on carbon 2 of heme B porphyrin ring with a hydroxyethyl farnesyl side group. The protein is Protoheme IX farnesyltransferase of Agrobacterium fabrum (strain C58 / ATCC 33970) (Agrobacterium tumefaciens (strain C58)).